The chain runs to 664 residues: Sorbicillinoid biosynthetic cluster transcription factor sor3 (664 aa).

Residues 40–67 (CQSCRASKVKCDGGRPVCARCQKRGRAC) constitute a DNA-binding region (zn(2)-C6 fungal-type). Positions 68-102 (SYSQHDAASPRGRGRQRAKAPTRQPRPIRSRASVE) are disordered.

The protein localises to the nucleus. Its function is as follows. Transcription factor that acts in concert with sor4 which is a transcriptional activator of the gene cluster that mediates the biosynthesis of sorbicillinoids, a diverse group of yellow secondary metabolites that restrict growth of competing pathogenic fungi but not of bacteria. Regulates the cluster genes in a light dependent manner. Also plays a direct or indirect role in regulation of paracelsin biosynthesis and cellulase gene expression. The protein is Sorbicillinoid biosynthetic cluster transcription factor sor3 of Hypocrea jecorina (strain QM6a) (Trichoderma reesei).